The sequence spans 681 residues: Probable L-type lectin-domain containing receptor kinase VII.2 (681 aa).

The first 23 residues, 1 to 23, serve as a signal peptide directing secretion; that stretch reads MFSKVSILLFSLASLLLFRSTTG. The tract at residues 24–260 is legume-lectin like; it reads IEFIYNSNFT…SHRILSWSFS (237 aa). At 24 to 290 the chain is on the extracellular side; sequence IEFIYNSNFT…SGDSVLKSKG (267 aa). N-linked (GlcNAc...) asparagine glycans are attached at residues asparagine 31, asparagine 42, asparagine 56, asparagine 72, asparagine 126, asparagine 202, asparagine 207, asparagine 228, and asparagine 263. Residues 291 to 311 form a helical membrane-spanning segment; that stretch reads FIAGVSSGVVLLVSVIGLLCF. The Cytoplasmic portion of the chain corresponds to 312–681; it reads YVVRRRRQRL…QTYDSILHGR (370 aa). Residues 349 to 624 form the Protein kinase domain; sequence FSDENMIGYG…VVQILEQGRL (276 aa). ATP contacts are provided by residues 355–363 and lysine 376; that span reads IGYGGNSKV. Aspartate 475 functions as the Proton acceptor in the catalytic mechanism.

The protein in the C-terminal section; belongs to the protein kinase superfamily. Ser/Thr protein kinase family. In the N-terminal section; belongs to the leguminous lectin family.

Its subcellular location is the cell membrane. It catalyses the reaction L-seryl-[protein] + ATP = O-phospho-L-seryl-[protein] + ADP + H(+). The enzyme catalyses L-threonyl-[protein] + ATP = O-phospho-L-threonyl-[protein] + ADP + H(+). This is Probable L-type lectin-domain containing receptor kinase VII.2 (LECRK72) from Arabidopsis thaliana (Mouse-ear cress).